The chain runs to 333 residues: Type II secretion system protein K (333 aa).

Positions 1–7 are cleaved as a propeptide — leader sequence; it reads MRRGQNG. Residues 8-29 traverse the membrane as a helical segment; it reads VALITVLLVVAVVTIVCAGLII. Residues 30–333 are Periplasmic-facing; it reads RQQLAIRSSA…GGDDWKKDER (304 aa). Positions 313–333 are disordered; the sequence is MGQGGLPIPSTGGDDWKKDER.

This sequence belongs to the GSP K family. Type II secretion is composed of four main components: the outer membrane complex, the inner membrane complex, the cytoplasmic secretion ATPase and the periplasm-spanning pseudopilus. Interacts with the tip of the type II pseudopilus subunits XcpV, XcpU and XcpW. Interacts with core component XcpT. In terms of processing, cleaved by prepilin peptidase.

The protein resides in the cell inner membrane. Functionally, component of the type II secretion system required for the energy-dependent secretion of extracellular factors such as proteases and toxins from the periplasm. Plays a role in pseudopilus assembly and seems to control its length. Interacts with the pseudopilus tip complex that is critical for the recognition and binding of secretion substrates. Type II pseudopilus confers increased bacterial adhesive capabilities. The chain is Type II secretion system protein K (xcpX) from Pseudomonas aeruginosa (strain ATCC 15692 / DSM 22644 / CIP 104116 / JCM 14847 / LMG 12228 / 1C / PRS 101 / PAO1).